The sequence spans 405 residues: Na(+)-translocating NADH-quinone reductase subunit F (405 aa).

Residues 3 to 23 (IILGIVMFTVIVLVLALMILF) form a helical membrane-spanning segment. The 93-residue stretch at 32–124 (GDITIKVNGE…DMDIEVPEEV (93 aa)) folds into the 2Fe-2S ferredoxin-type domain. [2Fe-2S] cluster-binding residues include C67, C73, C76, and C108. Positions 127 to 267 (VKKWECTVIS…SGPFGEFFAK (141 aa)) constitute an FAD-binding FR-type domain. The interval 270–387 (DAEMVFIGGG…PIMNQSVIKM (118 aa)) is catalytic.

Belongs to the NqrF family. As to quaternary structure, composed of six subunits; NqrA, NqrB, NqrC, NqrD, NqrE and NqrF. [2Fe-2S] cluster serves as cofactor. The cofactor is FAD.

Its subcellular location is the cell inner membrane. The enzyme catalyses a ubiquinone + n Na(+)(in) + NADH + H(+) = a ubiquinol + n Na(+)(out) + NAD(+). Functionally, NQR complex catalyzes the reduction of ubiquinone-1 to ubiquinol by two successive reactions, coupled with the transport of Na(+) ions from the cytoplasm to the periplasm. The first step is catalyzed by NqrF, which accepts electrons from NADH and reduces ubiquinone-1 to ubisemiquinone by a one-electron transfer pathway. This chain is Na(+)-translocating NADH-quinone reductase subunit F, found in Neisseria meningitidis serogroup B (strain ATCC BAA-335 / MC58).